A 102-amino-acid polypeptide reads, in one-letter code: Small ribosomal subunit protein uS10 (102 aa).

A disordered region spans residues 30–58 (TGVNLSGPIPLPTKTLEIPTRKSPDGEGT).

It belongs to the universal ribosomal protein uS10 family. In terms of assembly, part of the 30S ribosomal subunit.

Involved in the binding of tRNA to the ribosomes. The sequence is that of Small ribosomal subunit protein uS10 from Haloquadratum walsbyi (strain DSM 16790 / HBSQ001).